Consider the following 512-residue polypeptide: Mannose-1-phosphate guanylyltransferase (512 aa).

The protein belongs to the mannose-6-phosphate isomerase type 2 family.

It carries out the reaction alpha-D-mannose 1-phosphate + GTP + H(+) = GDP-alpha-D-mannose + diphosphate. The protein is Mannose-1-phosphate guanylyltransferase (noeJ) of Sinorhizobium fredii (strain NBRC 101917 / NGR234).